We begin with the raw amino-acid sequence, 133 residues long: Nucleoside diphosphate kinase (133 aa).

ATP is bound by residues Lys-9, Phe-57, Arg-85, Thr-91, Arg-102, and Asn-112. His-115 acts as the Pros-phosphohistidine intermediate in catalysis.

This sequence belongs to the NDK family. As to quaternary structure, homotetramer. The cofactor is Mg(2+).

Its subcellular location is the cytoplasm. The catalysed reaction is a 2'-deoxyribonucleoside 5'-diphosphate + ATP = a 2'-deoxyribonucleoside 5'-triphosphate + ADP. It catalyses the reaction a ribonucleoside 5'-diphosphate + ATP = a ribonucleoside 5'-triphosphate + ADP. Major role in the synthesis of nucleoside triphosphates other than ATP. The ATP gamma phosphate is transferred to the NDP beta phosphate via a ping-pong mechanism, using a phosphorylated active-site intermediate. The sequence is that of Nucleoside diphosphate kinase from Rubrobacter xylanophilus (strain DSM 9941 / JCM 11954 / NBRC 16129 / PRD-1).